The chain runs to 260 residues: Dehydrogenase/reductase SDR family member 4 (260 aa).

18–42 (IVTASTDGIGLAIARRLAQDGAHVV) serves as a coordination point for NADP(+). N6-acetyllysine; alternate is present on lysine 74. Lysine 74 carries the N6-succinyllysine; alternate modification. Serine 151 contributes to the substrate binding site. The Proton acceptor role is filled by tyrosine 164. Position 168 (lysine 168) interacts with NADP(+). An N6-acetyllysine; alternate modification is found at lysine 198. At lysine 198 the chain carries N6-succinyllysine; alternate. Phosphoserine is present on serine 202. Residue lysine 209 is modified to N6-succinyllysine. Residues 258 to 260 (SRL) carry the Peroxisomal targeting signal motif.

The protein belongs to the short-chain dehydrogenases/reductases (SDR) family. As to quaternary structure, homotetramer. As to expression, detected in liver and kidney. Detected at lower levels in heart, lung, spleen, small intestine, testis, brain and stomach.

It is found in the peroxisome. It catalyses the reaction a secondary alcohol + NADP(+) = a ketone + NADPH + H(+). It carries out the reaction 3alpha-hydroxy-5beta-pregnan-20-one + NADP(+) = 5beta-pregnan-3,20-dione + NADPH + H(+). The enzyme catalyses 5beta-dihydrotestosterone + NADPH + H(+) = 5beta-androstane-3alpha,17beta-diol + NADP(+). The catalysed reaction is all-trans-retinol + NADP(+) = all-trans-retinal + NADPH + H(+). It catalyses the reaction isatin + NADPH + H(+) = 3-hydroxyindolin-2-one + NADP(+). Inhibited by flavonoids (kaempferol, quercetin, quercitrin, genistein), myristic acid, pyrazole, barbital, phenobarbital and CuSO4. Its function is as follows. NADPH-dependent oxidoreductase which catalyzes the reduction of a variety of compounds bearing carbonyl groups including ketosteroids, alpha-dicarbonyl compounds, aldehydes, aromatic ketones and quinones. Reduces all-trans-retinal and 9-cis retinal. Reduces 3-ketosteroids and benzil into 3alpha-hydroxysteroids and S-benzoin, respectively, in contrast to the stereoselectivity of primates DHRS4s which produce 3beta-hydroxysteroids and R-benzoin. In the reverse reaction, catalyze the NADP-dependent oxidation of 3alpha-hydroxysteroids and alcohol, but with much lower efficiency. Involved in the metabolism of 3alpha-hydroxysteroids, retinoid, isatin and xenobiotic carbonyl compounds. This Oryctolagus cuniculus (Rabbit) protein is Dehydrogenase/reductase SDR family member 4 (DHRS4).